A 428-amino-acid chain; its full sequence is GTPase Obg (428 aa).

The region spanning 1 to 158 is the Obg domain; the sequence is MFVDQVKIYV…RDVILELKVL (158 aa). Positions 159–329 constitute an OBG-type G domain; the sequence is ADVGLVGFPS…LLFEVANLLE (171 aa). GTP contacts are provided by residues 165–172, 190–194, 212–215, 282–285, and 310–312; these read GFPSVGKS, FTTIV, DLPG, NKMD, and SAV. Residues serine 172 and threonine 192 each contribute to the Mg(2+) site. Residues 350-428 enclose the OCT domain; it reads KLETEGVKFD…ILEYEFEFID (79 aa).

This sequence belongs to the TRAFAC class OBG-HflX-like GTPase superfamily. OBG GTPase family. Monomer. The cofactor is Mg(2+).

The protein resides in the cytoplasm. Functionally, an essential GTPase which binds GTP, GDP and possibly (p)ppGpp with moderate affinity, with high nucleotide exchange rates and a fairly low GTP hydrolysis rate. Plays a role in control of the cell cycle, stress response, ribosome biogenesis and in those bacteria that undergo differentiation, in morphogenesis control. The sequence is that of GTPase Obg from Bacillus cereus (strain Q1).